We begin with the raw amino-acid sequence, 542 residues long: Delta 8-(E)-sphingolipid desaturase (542 aa).

Positions Met-1–Lys-75 constitute a Cytochrome b5 heme-binding domain. Positions 35 and 58 each coordinate heme. 2 helical membrane passes run Trp-215–His-235 and Ile-248–Trp-268. A Histidine box-1 motif is present at residues His-235–His-239. The Histidine box-2 motif lies at His-272–His-276. 3 helical membrane passes run Leu-329–Trp-346, Ala-360–Tyr-380, and Phe-393–Ser-413. The Histidine box-3 motif lies at Gln-455–His-459.

Belongs to the fatty acid desaturase type 1 family.

The protein resides in the membrane. It catalyses the reaction an N-acylsphing-4-enine + 2 Fe(II)-[cytochrome b5] + O2 + 2 H(+) = a (4E,8E)-4-sphinga-4,8-dienine ceramide + 2 Fe(III)-[cytochrome b5] + 2 H2O. It participates in lipid metabolism; sphingolipid metabolism. Functionally, delta(8)-fatty-acid desaturase which introduces a double bond at the 8-position in the long-chain base (LCB) of ceramides. Required for the formation of the di-unsaturated sphingoid base (E,E)-sphinga-4,8-dienine during glucosylceramide (GluCer) biosynthesis. This Komagataella phaffii (strain GS115 / ATCC 20864) (Yeast) protein is Delta 8-(E)-sphingolipid desaturase.